The following is a 472-amino-acid chain: 4-aminobutyrate aminotransferase (472 aa).

Pyridoxal 5'-phosphate is bound at residue 135–136 (GA). Residue Arg-193 coordinates substrate. Lys-327 is subject to N6-(pyridoxal phosphate)lysine. Thr-352 serves as a coordination point for pyridoxal 5'-phosphate.

Belongs to the class-III pyridoxal-phosphate-dependent aminotransferase family. As to quaternary structure, homodimer and homotetramer. Pyridoxal 5'-phosphate is required as a cofactor.

Its subcellular location is the cytoplasm. It carries out the reaction 4-aminobutanoate + 2-oxoglutarate = succinate semialdehyde + L-glutamate. It functions in the pathway amino-acid degradation; L-arginine degradation. Functionally, required for the degradation of gamma-aminobutyric acid (GABA), which is important for utilization of GABA as nitrogen source and for oxidative stress tolerance. Deaminates GABA to succinate semialdehyde, which in turn is converted to succinate by the succinate-semialdehyde dehydrogenase UGA2. May be involved in an alternative, arginase-independent arginine degradation pathway via GABA. The chain is 4-aminobutyrate aminotransferase from Kluyveromyces lactis (strain ATCC 8585 / CBS 2359 / DSM 70799 / NBRC 1267 / NRRL Y-1140 / WM37) (Yeast).